Here is a 939-residue protein sequence, read N- to C-terminus: Zinc finger RNA-binding protein 2 (939 aa).

Disordered regions lie at residues 1 to 72 (MATS…AYGS), 116 to 185 (GRMT…IVTS), 217 to 264 (FYPP…PKAG), 289 to 314 (HLGG…SPRG), 360 to 389 (LEPA…ASSR), 401 to 449 (ALCE…DAQP), 545 to 590 (RLEE…SSDD), and 906 to 939 (RLGA…EGLV). Polar residues-rich tracts occupy residues 137-147 (PHGSHSHAQPP) and 157-184 (QPAS…SIVT). Positions 217–239 (FYPPAQPPPPPGPPQQLPPPPAP) are enriched in pro residues. A coiled-coil region spans residues 516 to 549 (KVLEERMRKQRHLAEERLEQLRRWHAERRRLEEE). Positions 570–935 (RPESPASAPL…GEKKRGRRGG (366 aa)) constitute a DZF domain. Over residues 906-916 (RLGARFRKRQR) the composition is skewed to basic residues.

In Homo sapiens (Human), this protein is Zinc finger RNA-binding protein 2 (ZFR2).